Reading from the N-terminus, the 104-residue chain is Phosphate metabolism protein 6 (104 aa).

A helical membrane pass occupies residues 76-96; the sequence is IIVIIIVLLLYSLTMVGLFYV.

It is found in the vacuole membrane. In Saccharomyces cerevisiae (strain ATCC 204508 / S288c) (Baker's yeast), this protein is Phosphate metabolism protein 6 (PHM6).